The chain runs to 535 residues: Xylan 1,3-beta-xylosidase (535 aa).

The Proton acceptor role is filled by aspartate 16. Glutamate 189 functions as the Proton donor in the catalytic mechanism.

Belongs to the glycosyl hydrolase 43 family.

It carries out the reaction Hydrolysis of successive xylose residues from the non-reducing termini of (1-&gt;3)-beta-D-xylans.. With respect to regulation, inhibited by Ag(+), Cu(2+), Hg(2+), Mn(2+), Pb(2+), Zn(2+) and p-chloromercuric benzoic acid. Beta-1,3-xylosidase that hydrolyzes beta-1,3-xylooligosaccharides to D-xylose. This chain is Xylan 1,3-beta-xylosidase (xloA), found in Vibrio sp.